The primary structure comprises 699 residues: Triacylglycerol hydrolase DDHD2 (699 aa).

Positions 1–11 are enriched in polar residues; that stretch reads MSSGESHQEQL. Positions 1 to 25 are disordered; the sequence is MSSGESHQEQLSQSDPSPSPNSCSS. Residues 12–25 are compositionally biased toward low complexity; sequence SQSDPSPSPNSCSS. Residues 30 to 112 enclose the WWE domain; that stretch reads DMDASSSYEP…WDELPSEVRR (83 aa). Ser351 serves as the catalytic Nucleophile. Residues 383-445 form the SAM domain; that stretch reads DRGDASTLEE…KILNHFSARK (63 aa). Residue Ser447 is modified to Phosphoserine. Residues 484–688 enclose the DDHD domain; sequence LNYKPEIFFA…VLLVLKEIYQ (205 aa). Residues 599–635 form a disordered region; the sequence is QASETAEETEAEPESSSEKSNEANTEEPPVEVKEEAP. Positions 603–613 are enriched in acidic residues; that stretch reads TAEETEAEPES.

Belongs to the PA-PLA1 family. As to quaternary structure, forms homooligomers and, to a much smaller extent, heterooligomers with DDHD1.

Its subcellular location is the cytoplasm. It is found in the cytosol. The protein resides in the endoplasmic reticulum-Golgi intermediate compartment. The protein localises to the golgi apparatus. It localises to the cis-Golgi network. The catalysed reaction is a triacylglycerol + H2O = a diacylglycerol + a fatty acid + H(+). It carries out the reaction a diacylglycerol + H2O = a monoacylglycerol + a fatty acid + H(+). It catalyses the reaction a 1,3-diacylglycerol + H2O = a 1-acylglycerol + a fatty acid + H(+). The enzyme catalyses a 1-acylglycerol + H2O = glycerol + a fatty acid + H(+). The catalysed reaction is 1,2,3-tri-(9Z-octadecenoyl)-glycerol + H2O = di-(9Z)-octadecenoylglycerol + (9Z)-octadecenoate + H(+). It carries out the reaction di-(9Z)-octadecenoylglycerol + H2O = (9Z-octadecenoyl)-glycerol + (9Z)-octadecenoate + H(+). It catalyses the reaction 1,3-di-(9Z-octadecenoyl)-glycerol + H2O = 1-(9Z-octadecenoyl)-glycerol + (9Z)-octadecenoate + H(+). The enzyme catalyses trihexadecanoylglycerol + H2O = dihexadecanoylglycerol + hexadecanoate + H(+). The catalysed reaction is 1,2-di-(9Z-octadecenoyl)-sn-glycero-3-phosphocholine + H2O = (9Z-octadecenoyl)-sn-glycero-3-phosphocholine + (9Z)-octadecenoate + H(+). It carries out the reaction 1-(9Z-octadecenoyl)-glycerol + H2O = glycerol + (9Z)-octadecenoate + H(+). It catalyses the reaction 1,2-di-(9Z-octadecenoyl)-sn-glycero-3-phosphate + H2O = 2-(9Z-octadecenoyl)-sn-glycero-3-phosphate + (9Z)-octadecenoate + H(+). The enzyme catalyses 1-hexadecanoyl-2-(9Z-octadecenoyl)-sn-glycero-3-phosphate + H2O = 2-(9Z-octadecenoyl)-sn-glycero-3-phosphate + hexadecanoate + H(+). The catalysed reaction is 1-hexadecanoyl-2-(9Z-octadecenoyl)-sn-glycero-3-phosphoethanolamine + H2O = 2-(9Z-octadecenoyl)-sn-glycero-3-phosphoethanolamine + hexadecanoate + H(+). It carries out the reaction 1-hexadecanoyl-2-(9Z-octadecenoyl)-sn-glycero-3-phospho-L-serine + H2O = 2-(9Z-octadecenoyl)-sn-glycero-3-phospho-L-serine + hexadecanoate + H(+). It catalyses the reaction 1-hexadecanoyl-2-(9Z-octadecenoyl)-sn-glycero-3-phosphocholine + H2O = 2-(9Z-octadecenoyl)-sn-glycero-3-phosphocholine + hexadecanoate + H(+). Functionally, diacylglycerol (DAG) and triacylglycerol (TAG) lipase that is required for proper lipid homeostasis in the central nervous system. It cooperates with PNPLA2/ATGL in neuronal TAG catabolism and hydrolyzes sn-1,3-DAG downstream of PNPLA2/ATGL. In vitro, also acts as a phospholipase that hydrolyzes preferentially phosphatidic acids, including 1,2-dioleoyl-sn-phosphatidic acid, phosphatidylcholine and phosphatidylethanolamine. Specifically binds to phosphatidylinositol 3-phosphate (PI(3)P), phosphatidylinositol 4-phosphate (PI(4)P), phosphatidylinositol 5-phosphate (PI(5)P) and possibly phosphatidylinositol 4,5-bisphosphate (PI(4,5)P2). May be involved in the maintenance of the endoplasmic reticulum and/or Golgi structures. May regulate the transport between Golgi apparatus and plasma membrane. The chain is Triacylglycerol hydrolase DDHD2 from Mus musculus (Mouse).